A 207-amino-acid chain; its full sequence is Urease accessory protein UreG (207 aa).

Residue 16–23 coordinates GTP; that stretch reads GPVGSGKT.

It belongs to the SIMIBI class G3E GTPase family. UreG subfamily. Homodimer. UreD, UreF and UreG form a complex that acts as a GTP-hydrolysis-dependent molecular chaperone, activating the urease apoprotein by helping to assemble the nickel containing metallocenter of UreC. The UreE protein probably delivers the nickel.

It localises to the cytoplasm. Functionally, facilitates the functional incorporation of the urease nickel metallocenter. This process requires GTP hydrolysis, probably effectuated by UreG. This Cupriavidus metallidurans (strain ATCC 43123 / DSM 2839 / NBRC 102507 / CH34) (Ralstonia metallidurans) protein is Urease accessory protein UreG.